The chain runs to 217 residues: ATP-dependent Clp protease proteolytic subunit (217 aa).

The Nucleophile role is filled by Ser-121. His-146 is an active-site residue.

Belongs to the peptidase S14 family. As to quaternary structure, fourteen ClpP subunits assemble into 2 heptameric rings which stack back to back to give a disk-like structure with a central cavity, resembling the structure of eukaryotic proteasomes.

The protein localises to the cytoplasm. It carries out the reaction Hydrolysis of proteins to small peptides in the presence of ATP and magnesium. alpha-casein is the usual test substrate. In the absence of ATP, only oligopeptides shorter than five residues are hydrolyzed (such as succinyl-Leu-Tyr-|-NHMec, and Leu-Tyr-Leu-|-Tyr-Trp, in which cleavage of the -Tyr-|-Leu- and -Tyr-|-Trp bonds also occurs).. In terms of biological role, cleaves peptides in various proteins in a process that requires ATP hydrolysis. Has a chymotrypsin-like activity. Plays a major role in the degradation of misfolded proteins. The sequence is that of ATP-dependent Clp protease proteolytic subunit from Burkholderia vietnamiensis (strain G4 / LMG 22486) (Burkholderia cepacia (strain R1808)).